A 164-amino-acid polypeptide reads, in one-letter code: Protein SprT (164 aa).

Positions 14 to 156 constitute a SprT-like domain; that stretch reads QLAESFFKRP…LCRRCRNTLV (143 aa). Position 69 (histidine 69) interacts with Zn(2+). Glutamate 70 is an active-site residue. Histidine 73 provides a ligand contact to Zn(2+).

This sequence belongs to the SprT family. Zn(2+) serves as cofactor.

It localises to the cytoplasm. This Pseudomonas fluorescens (strain Pf0-1) protein is Protein SprT.